Here is a 154-residue protein sequence, read N- to C-terminus: uncharacterized protein (154 aa).

Helical transmembrane passes span 15–37 (DFSF…ALIT), 58–80 (FAAM…WLWG), 95–116 (LGAL…FAFT), and 123–145 (LVIS…FVPH).

Its subcellular location is the cell membrane. This is an uncharacterized protein from Archaeoglobus fulgidus (strain ATCC 49558 / DSM 4304 / JCM 9628 / NBRC 100126 / VC-16).